A 196-amino-acid polypeptide reads, in one-letter code: ATP-dependent Clp protease proteolytic subunit (196 aa).

Catalysis depends on Ser-96, which acts as the Nucleophile. His-121 is an active-site residue.

This sequence belongs to the peptidase S14 family. Fourteen ClpP subunits assemble into 2 heptameric rings which stack back to back to give a disk-like structure with a central cavity, resembling the structure of eukaryotic proteasomes.

It localises to the cytoplasm. It carries out the reaction Hydrolysis of proteins to small peptides in the presence of ATP and magnesium. alpha-casein is the usual test substrate. In the absence of ATP, only oligopeptides shorter than five residues are hydrolyzed (such as succinyl-Leu-Tyr-|-NHMec, and Leu-Tyr-Leu-|-Tyr-Trp, in which cleavage of the -Tyr-|-Leu- and -Tyr-|-Trp bonds also occurs).. Functionally, cleaves peptides in various proteins in a process that requires ATP hydrolysis. Has a chymotrypsin-like activity. Plays a major role in the degradation of misfolded proteins. This chain is ATP-dependent Clp protease proteolytic subunit, found in Streptococcus mutans serotype c (strain ATCC 700610 / UA159).